The following is a 239-amino-acid chain: Dephospho-CoA kinase (239 aa).

Residues 3–206 form the DPCK domain; the sequence is IIGLTGSIAS…GGEGGEPAAG (204 aa). 11–16 lines the ATP pocket; the sequence is ASGKST. The segment at 197–239 is disordered; sequence GGEGGEPAAGSSAHHGAGSVDPGAGPCDGPGAAPEAERRGGDR. The segment covering 204–230 has biased composition (low complexity); the sequence is AAGSSAHHGAGSVDPGAGPCDGPGAAP.

It belongs to the CoaE family.

Its subcellular location is the cytoplasm. The catalysed reaction is 3'-dephospho-CoA + ATP = ADP + CoA + H(+). It functions in the pathway cofactor biosynthesis; coenzyme A biosynthesis; CoA from (R)-pantothenate: step 5/5. Functionally, catalyzes the phosphorylation of the 3'-hydroxyl group of dephosphocoenzyme A to form coenzyme A. This is Dephospho-CoA kinase from Symbiobacterium thermophilum (strain DSM 24528 / JCM 14929 / IAM 14863 / T).